Consider the following 421-residue polypeptide: Histidine--tRNA ligase (421 aa).

It belongs to the class-II aminoacyl-tRNA synthetase family. Homodimer.

It localises to the cytoplasm. The catalysed reaction is tRNA(His) + L-histidine + ATP = L-histidyl-tRNA(His) + AMP + diphosphate + H(+). In Francisella tularensis subsp. holarctica (strain LVS), this protein is Histidine--tRNA ligase.